The sequence spans 116 residues: Large ribosomal subunit protein uL24 (116 aa).

The interval 1–21 is disordered; it reads MATNNGAGKARHKFHVKKGDT.

The protein belongs to the universal ribosomal protein uL24 family. Part of the 50S ribosomal subunit.

Functionally, one of two assembly initiator proteins, it binds directly to the 5'-end of the 23S rRNA, where it nucleates assembly of the 50S subunit. In terms of biological role, one of the proteins that surrounds the polypeptide exit tunnel on the outside of the subunit. The sequence is that of Large ribosomal subunit protein uL24 from Gloeobacter violaceus (strain ATCC 29082 / PCC 7421).